The following is a 616-amino-acid chain: MALLQISEPGLSAAPHQRRLAVGIDLGTTHSLVATVRSGEAQTLTDSDGRDLLPSVVHYRHDGHSVGWHARDNAVHDLENTVSSVKRLMGRSLADIQQRYPHLPYRFHASDNGLPLIQTSAGNLNPVQVSADILSALAARAESALGGVPDGVVITVPAYFDDAQRQGTKDAARLAGLHVLRLLNEPTAAAIAYGLDSGKEGVIAIYDLGGGTFDISVLRLSRGVFEVLATGGDSALGGDDFDHLLAEWLREQAGVHDRDDRQLDHAFRDAAVKAKIALSSADAIDVDVAGWQGTITREQLDALIAPLVKRTLLSCRRTLKDAGLTAQDVQEVVMVGGSTRVPLVREQVGTFFGRTPLTSIDPDKVVAIGAAIQADILVGNKPDSEMLLLDVIPLSLGLETMGGLVEKIIPRNTTIPVARAQEFTTFKDGQSGMMIHLLQGEREMVTDCRSLARFSLRGLPSLPAGGAHIRVTFQVDADGLLSVTAMEKSTGVEASIQVKPSYGLSDTEIATMITDSMLNAKEDVGARRLAEQKVESARVLESLQSALVADAALLSNDEKGIIVAASEHLHTMMQGSDPVAIEAAIKTVDQQTQEFAARRMDASIRRALAGHSVDEV.

Belongs to the heat shock protein 70 family.

In terms of biological role, chaperone involved in the maturation of iron-sulfur cluster-containing proteins. Has a low intrinsic ATPase activity which is markedly stimulated by HscB. Involved in the maturation of IscU. The protein is Chaperone protein HscA of Pectobacterium atrosepticum (strain SCRI 1043 / ATCC BAA-672) (Erwinia carotovora subsp. atroseptica).